An 858-amino-acid polypeptide reads, in one-letter code: Leucine--tRNA ligase (858 aa).

Positions 42 to 52 match the 'HIGH' region motif; it reads PYPSGNLHMGH. Polar residues predominate over residues 584 to 594; it reads NPNRSDSSRYI. Residues 584 to 611 are disordered; sequence NPNRSDSSRYIPSNLVDPNDPKDPETGE. The 'KMSKS' region signature appears at 619–623; it reads TMSKS. Residue Lys-622 participates in ATP binding.

The protein belongs to the class-I aminoacyl-tRNA synthetase family.

It localises to the cytoplasm. It catalyses the reaction tRNA(Leu) + L-leucine + ATP = L-leucyl-tRNA(Leu) + AMP + diphosphate. The polypeptide is Leucine--tRNA ligase (Cyanothece sp. (strain PCC 7425 / ATCC 29141)).